Consider the following 212-residue polypeptide: Ribosomal RNA small subunit methyltransferase G (212 aa).

S-adenosyl-L-methionine-binding positions include G80, L85, 131–132 (AE), and R146.

This sequence belongs to the methyltransferase superfamily. RNA methyltransferase RsmG family.

Its subcellular location is the cytoplasm. The enzyme catalyses guanosine(527) in 16S rRNA + S-adenosyl-L-methionine = N(7)-methylguanosine(527) in 16S rRNA + S-adenosyl-L-homocysteine. In terms of biological role, specifically methylates the N7 position of guanine in position 527 of 16S rRNA. The polypeptide is Ribosomal RNA small subunit methyltransferase G (Stenotrophomonas maltophilia (strain K279a)).